Here is a 124-residue protein sequence, read N- to C-terminus: Large ribosomal subunit protein bL12 (124 aa).

It belongs to the bacterial ribosomal protein bL12 family. As to quaternary structure, homodimer. Part of the ribosomal stalk of the 50S ribosomal subunit. Forms a multimeric L10(L12)X complex, where L10 forms an elongated spine to which 2 to 4 L12 dimers bind in a sequential fashion. Binds GTP-bound translation factors.

Functionally, forms part of the ribosomal stalk which helps the ribosome interact with GTP-bound translation factors. Is thus essential for accurate translation. The sequence is that of Large ribosomal subunit protein bL12 from Bacteroides fragilis (strain ATCC 25285 / DSM 2151 / CCUG 4856 / JCM 11019 / LMG 10263 / NCTC 9343 / Onslow / VPI 2553 / EN-2).